The following is an 89-amino-acid chain: Putative acyl-CoA-binding protein (89 aa).

The ACB domain maps to 3-88 (VEEQFKTSAE…VKELVEKNGL (86 aa)). An acyl-CoA-binding positions include lysine 15, 30-34 (YSLYK), lysine 52, lysine 56, and tyrosine 75.

It belongs to the ACBP family.

Binds medium- and long-chain acyl-CoA esters with very high affinity and may function as an intracellular carrier of acyl-CoA esters. The sequence is that of Putative acyl-CoA-binding protein from Hypsibius exemplaris (Freshwater tardigrade).